A 650-amino-acid chain; its full sequence is Acetyl-coenzyme A synthetase (650 aa).

CoA-binding positions include 191-194 (RAGR), threonine 311, and asparagine 335. Residues 387 to 389 (GEP), 411 to 416 (DTWWQT), aspartate 500, and arginine 515 each bind ATP. Serine 523 provides a ligand contact to CoA. Arginine 526 contributes to the ATP binding site. Residues valine 537, histidine 539, and valine 542 each contribute to the Mg(2+) site. Arginine 584 is a CoA binding site. At lysine 609 the chain carries N6-acetyllysine.

This sequence belongs to the ATP-dependent AMP-binding enzyme family. Requires Mg(2+) as cofactor. Post-translationally, acetylated. Deacetylation by the SIR2-homolog deacetylase activates the enzyme.

The catalysed reaction is acetate + ATP + CoA = acetyl-CoA + AMP + diphosphate. Its function is as follows. Catalyzes the conversion of acetate into acetyl-CoA (AcCoA), an essential intermediate at the junction of anabolic and catabolic pathways. AcsA undergoes a two-step reaction. In the first half reaction, AcsA combines acetate with ATP to form acetyl-adenylate (AcAMP) intermediate. In the second half reaction, it can then transfer the acetyl group from AcAMP to the sulfhydryl group of CoA, forming the product AcCoA. This chain is Acetyl-coenzyme A synthetase, found in Shewanella pealeana (strain ATCC 700345 / ANG-SQ1).